Here is a 269-residue protein sequence, read N- to C-terminus: Indole-3-glycerol phosphate synthase 1 (269 aa).

The protein belongs to the TrpC family.

The catalysed reaction is 1-(2-carboxyphenylamino)-1-deoxy-D-ribulose 5-phosphate + H(+) = (1S,2R)-1-C-(indol-3-yl)glycerol 3-phosphate + CO2 + H2O. Its pathway is amino-acid biosynthesis; L-tryptophan biosynthesis; L-tryptophan from chorismate: step 4/5. This is Indole-3-glycerol phosphate synthase 1 (trpC1) from Streptomyces coelicolor (strain ATCC BAA-471 / A3(2) / M145).